The sequence spans 434 residues: Neuropeptide receptor 22 (434 aa).

Residues 1 to 55 lie on the Extracellular side of the membrane; the sequence is MDEGGGIGSSLLSRITTTASEIMMRNEPTTTENPAVQEMNHIYHLTPSMKMLCIL. A helical transmembrane segment spans residues 56–76; the sequence is FYSILCVCCVYGNVLVILVIV. The Cytoplasmic portion of the chain corresponds to 77 to 86; it reads YFKRLRTATN. The helical transmembrane segment at 87-107 threads the bilayer; sequence ILILNLAVADLLISVFCIPFS. Residues 108–128 lie on the Extracellular side of the membrane; the sequence is YWQVLIYDDQRWLFGSMMCSL. A disulfide bridge links Cys-126 with Cys-204. A helical membrane pass occupies residues 129-149; the sequence is LAFLQAMAVFLSAWTLVVISF. The Cytoplasmic portion of the chain corresponds to 150–169; it reads DRWMAIMFLLTPNIRITRRR. The chain crosses the membrane as a helical span at residues 170–190; sequence ALYLVAATWIFSILMALPLLF. The Extracellular segment spans residues 191-226; the sequence is TTRFFEDQDGLPNCGENWTYFGDSGEQVRKVYSSMV. An N-linked (GlcNAc...) asparagine glycan is attached at Asn-207. The chain crosses the membrane as a helical span at residues 227 to 247; that stretch reads LILQYVVPQAVLIITYTHIGI. Over 248–277 the chain is Cytoplasmic; it reads KMWNSRVPGMQNGATKKMIVDRHESVKKLV. A helical transmembrane segment spans residues 278-298; that stretch reads PMVILISALFALCWLPLLILI. The Extracellular portion of the chain corresponds to 299–310; that stretch reads NVIPEFYPDINS. The chain crosses the membrane as a helical span at residues 311–331; sequence WGYILYLWWFAHGLAMSHSMV. Topologically, residues 332–434 are cytoplasmic; the sequence is NPIIYFIRNA…VRNNSANSLA (103 aa).

Belongs to the G-protein coupled receptor 1 family. As to expression, expressed in many cells, mainly in the head region, with expression detected in the head muscles, I2 neurons, MC neurons, RIH neuron, AIA neurons, AUA neurons, ASK neurons, ASI neurons, a few B-type motorneurons in the posterior ventral nerve cord, pharyngeal muscles, body wall muscles, the intestine and a few classes of unidentified cells anterior to the nerve ring. Expression in the MC neurons is important to mediate suppression of feeding while expression in the RIH neuron is important for the facilitation of egg-laying. No expression detected in other tissues including hypodermis.

The protein localises to the cell membrane. Its function is as follows. Receptor for the LURY-1-1 and LURY-1-2 peptides which control food-related processes including feeding, lifespan, egg-laying and roaming behavior. Receptor for flp-7 which stimulates serotonin-induced fat loss. Serotonin induces secretion of flp-7 from neurons and binding to npr-22 which leads to induction of the atgp-1 lipase and subsequent fat loss. Acts in vitro as a receptor for the flp-7 FMRFamide-like neuropeptides TPMQRSSMVRF-amide, SPMQRSSMVRF-amide, SPMERSAMVRF-amide and SPMDRSKMVRF-amide. Also acts in vitro as a receptor for a number of other FMRFamide-like neuropeptides including the flp-1 neuropeptide PNFMRY-amide, the flp-9 neuropeptide KPSFVRF-amide, the flp-11 neuropeptides AMRNALVRF-amide, ASGGMRNALVRF-amide and NGAPQPFVRF-amide, the flp-13 neuropeptides AADGAPLIRF-amide, ASPSAPLIRF-amide, SPSAVPLIRF-amide, SAAAPLIRF-amide and ASSAPLIRF-amide, and the flp-22 neuropeptide SPSAKWMRF-amide. The SPMERSAMVRF-amide neuropeptide from flp-7 acts as the strongest in vitro activator of npr-22. This chain is Neuropeptide receptor 22, found in Caenorhabditis elegans.